A 258-amino-acid chain; its full sequence is 4-hydroxy-2-oxovalerate aldolase (258 aa).

The active-site Proton acceptor is H48. Substrate is bound at residue Q149. E151 contributes to the Mg(2+) binding site. 2 residues coordinate substrate: A176 and D177. D177 is a Mg(2+) binding site.

Belongs to the HpcH/HpaI aldolase family.

It carries out the reaction (S)-4-hydroxy-2-oxopentanoate = acetaldehyde + pyruvate. The protein operates within xenobiotic degradation; biphenyl degradation. In terms of biological role, catalyzes the reversible retro-aldol cleavage of 4-hydroxy-2-oxovalerate to pyruvate and acetaldehyde. The sequence is that of 4-hydroxy-2-oxovalerate aldolase (bphF) from Rhodococcus jostii (strain RHA1).